We begin with the raw amino-acid sequence, 957 residues long: Glycine dehydrogenase (decarboxylating) (957 aa).

Residue lysine 708 is modified to N6-(pyridoxal phosphate)lysine.

Belongs to the GcvP family. As to quaternary structure, the glycine cleavage system is composed of four proteins: P, T, L and H. Pyridoxal 5'-phosphate serves as cofactor.

It catalyses the reaction N(6)-[(R)-lipoyl]-L-lysyl-[glycine-cleavage complex H protein] + glycine + H(+) = N(6)-[(R)-S(8)-aminomethyldihydrolipoyl]-L-lysyl-[glycine-cleavage complex H protein] + CO2. The glycine cleavage system catalyzes the degradation of glycine. The P protein binds the alpha-amino group of glycine through its pyridoxal phosphate cofactor; CO(2) is released and the remaining methylamine moiety is then transferred to the lipoamide cofactor of the H protein. This chain is Glycine dehydrogenase (decarboxylating), found in Escherichia coli O17:K52:H18 (strain UMN026 / ExPEC).